Here is a 469-residue protein sequence, read N- to C-terminus: Putative dipeptidase SH1171 (469 aa).

A Zn(2+)-binding site is contributed by H84. The active site involves D86. Position 115 (D115) interacts with Zn(2+). E149 (proton acceptor) is an active-site residue. E150, D173, and H440 together coordinate Zn(2+).

The protein belongs to the peptidase M20A family. Zn(2+) is required as a cofactor.

In Staphylococcus haemolyticus (strain JCSC1435), this protein is Putative dipeptidase SH1171.